Consider the following 188-residue polypeptide: uncharacterized protein (188 aa).

The N-terminal stretch at 1–18 (MTLRIIAHLLALTASLAG) is a signal peptide. Cysteine 19 is lipidated: N-palmitoyl cysteine. A lipid anchor (S-diacylglycerol cysteine) is attached at cysteine 19.

It localises to the cell membrane. This is an uncharacterized protein from Sinorhizobium fredii (strain NBRC 101917 / NGR234).